A 77-amino-acid chain; its full sequence is Protein ImpC (77 aa).

This sequence belongs to the DinI family.

This Salmonella typhimurium protein is Protein ImpC (impC).